We begin with the raw amino-acid sequence, 683 residues long: MKPSWLQCRKVTGAGTLGAPLPGSPSVRGAGVARRALVAGFGGRGCRALTTSSGGGEYKTHFAASVADPERFWGKAAEQISWYKPWTKTLENRYPPSTSWFVEGMLNICYNAIDRHIENGQGDKIAIIYDSPVTDTKATISYKEVLEQVSKLAGVLVKQGVKKGDTVVIYMPMIPQAIYAMLACARIGAIHSLIFGGFASKELSTRIDHVKPKVVVTASFGIEPGRKVEYMPLLEEALRIGQHKPDRLLIYNRPNMEKVPLMSGRDLDWEEEMAKAQSHDCVPVLSEHPLYILYTSGTTGLPKGVVRPTGGYAVMLNWTMSSIYGLKPGEVWWAASDLGWVVGHSYICYGPLLHGNTTVLYEGKPVGTPDAGAYFRVLAEHGVAALFTAPTAIRAIRQQDPGAALGKQYSLTRFKTLFVAGERCDVETLEWSKKVFRVPVLDHWWQTETGSPITASCIGLGNSKTPPPGQAGKCVPGYNVMILDDNMQKLKARSLGNIVVKLPLPPGAFSGLWKNQEAFKHLYFEKFPGYYDTMDAGYMDEEGYLYVMSRVDDVINVAGHRISAGAIEESVLSHGTVTDCAVVGKEDPLKGHVPLALCVLKKDVNATEEQVLEEIVKHVRQSIGPVAAFRNAVFVKQLPKTRSGKIPRSTLSALVNGKPYKVTPTIEDPSIFGHIEEVLKQAL.

Residues 1–29 constitute a mitochondrion transit peptide; the sequence is MKPSWLQCRKVTGAGTLGAPLPGSPSVRG. CoA is bound at residue 223–226; it reads EPGR. Residues 421–423 and 442–447 contribute to the ATP site; these read GER and DHWWQT. The residue at position 514 (Lys514) is an N6-succinyllysine. Lys520 is subject to N6-acetyllysine. ATP is bound by residues Asp535, Arg550, and Arg561. Residue Arg620 participates in CoA binding.

Belongs to the ATP-dependent AMP-binding enzyme family. Expressed in a wide range of tissues, with the highest levels observed in the liver followed by kidney.

The protein localises to the mitochondrion matrix. It catalyses the reaction acetate + ATP + CoA = acetyl-CoA + AMP + diphosphate. It carries out the reaction propanoate + ATP + CoA = propanoyl-CoA + AMP + diphosphate. The catalysed reaction is butanoate + ATP + CoA = butanoyl-CoA + AMP + diphosphate. Its function is as follows. Catalyzes the synthesis of acetyl-CoA from short-chain fatty acids. Propionate is the preferred substrate but can also utilize acetate and butyrate with a much lower affinity. In Rattus norvegicus (Rat), this protein is Acyl-CoA synthetase short-chain family member 3, mitochondrial (Acss3).